The following is a 211-amino-acid chain: Proteasome subunit beta 1 (211 aa).

A propeptide spans 1 to 17 (MVIMGNELQLENKILKG) (removed in mature form; by autocatalysis). T18 functions as the Nucleophile in the catalytic mechanism.

It belongs to the peptidase T1B family. The 20S proteasome core is composed of 14 alpha and 14 beta subunits that assemble into four stacked heptameric rings, resulting in a barrel-shaped structure. The two inner rings, each composed of seven catalytic beta subunits, are sandwiched by two outer rings, each composed of seven alpha subunits. The catalytic chamber with the active sites is on the inside of the barrel. Has a gated structure, the ends of the cylinder being occluded by the N-termini of the alpha-subunits. Is capped at one or both ends by the proteasome regulatory ATPase, PAN.

It localises to the cytoplasm. It catalyses the reaction Cleavage of peptide bonds with very broad specificity.. Its activity is regulated as follows. The formation of the proteasomal ATPase PAN-20S proteasome complex, via the docking of the C-termini of PAN into the intersubunit pockets in the alpha-rings, triggers opening of the gate for substrate entry. Interconversion between the open-gate and close-gate conformations leads to a dynamic regulation of the 20S proteasome proteolysis activity. In terms of biological role, component of the proteasome core, a large protease complex with broad specificity involved in protein degradation. The sequence is that of Proteasome subunit beta 1 from Saccharolobus islandicus (strain M.16.27) (Sulfolobus islandicus).